Here is a 201-residue protein sequence, read N- to C-terminus: Peroxiredoxin 2 (201 aa).

Residues Val3 to Ala156 enclose the Thioredoxin domain. Cys44 serves as the catalytic Cysteine sulfenic acid (-SOH) intermediate. Arg119 lines the substrate pocket.

This sequence belongs to the peroxiredoxin family. Prx6 subfamily. Homodecamer. Pentamer of dimers that assemble into a ring structure.

The protein localises to the cytoplasm. The enzyme catalyses a hydroperoxide + [thioredoxin]-dithiol = an alcohol + [thioredoxin]-disulfide + H2O. In terms of biological role, thiol-specific peroxidase that catalyzes the reduction of hydrogen peroxide and organic hydroperoxides to water and alcohols, respectively. Plays a role in cell protection against oxidative stress by detoxifying peroxides. In Picrophilus torridus (strain ATCC 700027 / DSM 9790 / JCM 10055 / NBRC 100828 / KAW 2/3), this protein is Peroxiredoxin 2.